The primary structure comprises 147 residues: Large ribosomal subunit protein uL15 (147 aa).

The span at 1-15 (MTDRVKKTRKLRGHV) shows a compositional bias: basic residues. Positions 1–34 (MTDRVKKTRKLRGHVSHGYGRVGKHRKHSGGRGL) are disordered.

This sequence belongs to the universal ribosomal protein uL15 family.

The polypeptide is Large ribosomal subunit protein uL15 (RPL27A) (Encephalitozoon cuniculi (strain GB-M1) (Microsporidian parasite)).